Reading from the N-terminus, the 268-residue chain is Zwei Ig domain protein zig-8 (268 aa).

The first 21 residues, 1-21, serve as a signal peptide directing secretion; the sequence is MRRFSNICVILFSFLYATGHG. Ig-like C2-type domains lie at 40–128 and 140–251; these read PSQT…NTVY and PSPS…NSAT. Cysteines 57 and 118 form a disulfide. N-linked (GlcNAc...) asparagine glycosylation is found at Asn82, Asn155, Asn164, and Asn191. A disulfide bond links Cys165 and Cys226.

As to expression, expressed in PVT neurons and pharyngeal muscles.

The protein localises to the secreted. Its function is as follows. Together with zig-5, required postembryonically to maintain the position of ASI and ASH head neuron cell bodies and ventral nerve cord axons of PVQ, PVP and HSN neurons by preventing their displacement that could occur during body growth and movement. May act by reducing L1CAM-like protein sax-7 (long isoform) adhesion. This is Zwei Ig domain protein zig-8 from Caenorhabditis elegans.